A 243-amino-acid chain; its full sequence is MAELLLGVNIDHIATLRNARGTDYPDPVQAAFIAEQAGADGITVHLREDRRHITDRDVRILRQTLHTRMNLEMAVTEEMLAIAVETRPHFCCLVPEKRQEVTTEGGLDVAGQRDKMRDACARLAAAGIQVSLFIDADEAQINAAAEVGAPFIEIHTGCYANAETDAEQAKELARIASAATLAARLGLKVNAGHGLTYHNVKAIAALPEMHELNIGHAIIGRAVMTGLKEAVAEMKRLMLEARG.

Position 9 (Asn9) interacts with 3-amino-2-oxopropyl phosphate. A 1-deoxy-D-xylulose 5-phosphate-binding site is contributed by 11-12 (DH). 3-amino-2-oxopropyl phosphate is bound at residue Arg20. Residue His45 is the Proton acceptor of the active site. Arg47 and His52 together coordinate 1-deoxy-D-xylulose 5-phosphate. Glu72 acts as the Proton acceptor in catalysis. A 1-deoxy-D-xylulose 5-phosphate-binding site is contributed by Thr102. His193 (proton donor) is an active-site residue. Residues Gly194 and 215-216 (GH) each bind 3-amino-2-oxopropyl phosphate.

This sequence belongs to the PNP synthase family. Homooctamer; tetramer of dimers.

The protein localises to the cytoplasm. The enzyme catalyses 3-amino-2-oxopropyl phosphate + 1-deoxy-D-xylulose 5-phosphate = pyridoxine 5'-phosphate + phosphate + 2 H2O + H(+). Its pathway is cofactor biosynthesis; pyridoxine 5'-phosphate biosynthesis; pyridoxine 5'-phosphate from D-erythrose 4-phosphate: step 5/5. Functionally, catalyzes the complicated ring closure reaction between the two acyclic compounds 1-deoxy-D-xylulose-5-phosphate (DXP) and 3-amino-2-oxopropyl phosphate (1-amino-acetone-3-phosphate or AAP) to form pyridoxine 5'-phosphate (PNP) and inorganic phosphate. The polypeptide is Pyridoxine 5'-phosphate synthase (Salmonella paratyphi A (strain ATCC 9150 / SARB42)).